We begin with the raw amino-acid sequence, 827 residues long: Translation initiation factor IF-2 (827 aa).

Positions 49–205 (ALNREKEEKE…GAPDKKREWE (157 aa)) are disordered. Basic and acidic residues-rich tracts occupy residues 50-73 (LNRE…KAEA), 96-106 (RPREQRSDRPQ), 116-129 (PEPR…RPGE), 137-150 (RPRD…KERG), 157-168 (FGEKKERPPFPR), and 182-205 (EAPK…REWE). Positions 326 to 495 (PRPPIVTVMG…LLVADLKELK (170 aa)) constitute a tr-type G domain. The tract at residues 335 to 342 (GHVDHGKT) is G1. GTP is bound at residue 335–342 (GHVDHGKT). The G2 stretch occupies residues 360 to 364 (GITQH). The tract at residues 381 to 384 (DTPG) is G3. Residues 381–385 (DTPGH) and 435–438 (NKID) contribute to the GTP site. The G4 stretch occupies residues 435-438 (NKID). Residues 471 to 473 (SAL) form a G5 region.

The protein belongs to the TRAFAC class translation factor GTPase superfamily. Classic translation factor GTPase family. IF-2 subfamily.

It is found in the cytoplasm. Its function is as follows. One of the essential components for the initiation of protein synthesis. Protects formylmethionyl-tRNA from spontaneous hydrolysis and promotes its binding to the 30S ribosomal subunits. Also involved in the hydrolysis of GTP during the formation of the 70S ribosomal complex. The chain is Translation initiation factor IF-2 from Carboxydothermus hydrogenoformans (strain ATCC BAA-161 / DSM 6008 / Z-2901).